A 394-amino-acid chain; its full sequence is Elongation factor Tu (394 aa).

Residues 10–204 (KPHVNVGTIG…ALDSYIPTPE (195 aa)) form the tr-type G domain. The segment at 19–26 (GHVDHGKT) is G1. GTP is bound at residue 19–26 (GHVDHGKT). T26 contacts Mg(2+). The G2 stretch occupies residues 60-64 (GITIN). A G3 region spans residues 81 to 84 (DCPG). GTP is bound by residues 81-85 (DCPGH) and 136-139 (NKCD). Residues 136 to 139 (NKCD) form a G4 region. The segment at 174–176 (SAL) is G5.

Belongs to the TRAFAC class translation factor GTPase superfamily. Classic translation factor GTPase family. EF-Tu/EF-1A subfamily. In terms of assembly, monomer.

The protein resides in the cytoplasm. It carries out the reaction GTP + H2O = GDP + phosphate + H(+). Functionally, GTP hydrolase that promotes the GTP-dependent binding of aminoacyl-tRNA to the A-site of ribosomes during protein biosynthesis. This chain is Elongation factor Tu, found in Neisseria gonorrhoeae (strain ATCC 700825 / FA 1090).